The sequence spans 452 residues: UDP-N-acetylmuramate--L-alanine ligase (452 aa).

Residue 110 to 116 (GTHGKTT) coordinates ATP.

This sequence belongs to the MurCDEF family.

The protein resides in the cytoplasm. It catalyses the reaction UDP-N-acetyl-alpha-D-muramate + L-alanine + ATP = UDP-N-acetyl-alpha-D-muramoyl-L-alanine + ADP + phosphate + H(+). Its pathway is cell wall biogenesis; peptidoglycan biosynthesis. Cell wall formation. This chain is UDP-N-acetylmuramate--L-alanine ligase, found in Francisella philomiragia subsp. philomiragia (strain ATCC 25017 / CCUG 19701 / FSC 153 / O#319-036).